The sequence spans 449 residues: Probable magnetosome protein Mms48 (449 aa).

The N-terminal stretch at 1-18 is a signal peptide; it reads MLLRLIVLLIFMSPVVFA. The chain crosses the membrane as a helical span at residues 40–60; it reads SNMPVLLAVILVVFLIFSALS. Residues 323–356 form a TPR repeat; it reads PDGHLAAGEAAFAVQKWGVARRHIMAALKIAPDA.

Its subcellular location is the magnetosome membrane. In terms of biological role, overexpression in wild-type cells increases the number of cells with double magnetosome chains significantly. The 4 genes of this operon collectively influence magnetosome size and number. This chain is Probable magnetosome protein Mms48, found in Magnetospirillum gryphiswaldense (strain DSM 6361 / JCM 21280 / NBRC 15271 / MSR-1).